The chain runs to 890 residues: Leucine-rich repeat receptor-like tyrosine-protein kinase PXC3 (890 aa).

The signal sequence occupies residues 1-23 (MTFWCMSILLIVGFLSKSELCEA). The Extracellular portion of the chain corresponds to 24–534 (QLSDEATLVA…LRYNHRVSYR (511 aa)). 4 N-linked (GlcNAc...) asparagine glycosylation sites follow: Asn-46, Asn-61, Asn-78, and Asn-108. LRR repeat units lie at residues 67-85 (MLDLSGLQLRGNVTLISDL), 86-108 (RSLKHLDLSGNNFNGRIPTSFGN), 110-132 (SELEFLDLSLNRFVGAIPVEFGK), 133-157 (LRGLRAFNISNNLLVGEIPDELKVL), 159-181 (RLEEFQVSGNGLNGSIPHWVGNL), 182-205 (SSLRVFTAYENDLVGEIPNGLGLV), 206-229 (SELELLNLHSNQLEGKIPKGIFEK), 231-254 (KLKVLVLTQNRLTGELPEAVGICS), 256-276 (LSSIRIGNNELVGVIPRTIGN), 278-300 (SGLTYFEADKNNLSGEIVAEFSK), 301-325 (CSNLTLLNLAANGFAGTIPTELGQL), 326-349 (INLQELILSGNSLFGEIPKSFLGS), 350-373 (GNLNKLDLSNNRLNGTIPKELCSM), 375-397 (RLQYLLLDQNSIRGDIPHEIGNC), 399-421 (KLLQLQLGRNYLTGTIPPEIGRM), 422-446 (RNLQIALNLSFNHLHGSLPPELGKL), 447-469 (DKLVSLDVSNNLLTGSIPPLLKG), and 471-492 (MSLIEVNFSNNLLNGPVPVFVP). Asn-140, Asn-171, and Asn-180 each carry an N-linked (GlcNAc...) asparagine glycan. N-linked (GlcNAc...) asparagine glycosylation is found at Asn-276, Asn-289, and Asn-303. Residue Asn-363 is glycosylated (N-linked (GlcNAc...) asparagine). N-linked (GlcNAc...) asparagine glycosylation is present at Asn-429. Residues Asn-477 and Asn-498 are each glycosylated (N-linked (GlcNAc...) asparagine). The helical transmembrane segment at 535 to 555 (IVLAVIGSGVAVFVSVTVVVL) threads the bilayer. The Cytoplasmic portion of the chain corresponds to 556-890 (LFMMREKQEK…EMLQEVKQIK (335 aa)). In terms of domain architecture, Protein kinase spans 608–886 (MKESNKLSTG…KKVVEMLQEV (279 aa)). ATP is bound by residues 614-622 (LSTGTFSSV) and Lys-636. Asp-735 serves as the catalytic Proton acceptor.

Belongs to the protein kinase superfamily. Tyr protein kinase family. Expressed in the vascular strands of cotyledons, the shoot apex, hypocotyls, roots, leaves, stems and flowers.

Its subcellular location is the cell membrane. It carries out the reaction L-tyrosyl-[protein] + ATP = O-phospho-L-tyrosyl-[protein] + ADP + H(+). Leucine-rich repeat receptor-like protein kinase that may play a role in vascular tissues development. This Arabidopsis thaliana (Mouse-ear cress) protein is Leucine-rich repeat receptor-like tyrosine-protein kinase PXC3.